Here is a 131-residue protein sequence, read N- to C-terminus: Keratin, high-sulfur matrix protein, IIIA3 (131 aa).

As to expression, wool.

Functionally, the keratin products of mammalian epidermal derivatives such as wool and hair consist of microfibrils embedded in a rigid matrix of other proteins. The matrix proteins include the high-sulfur and high-tyrosine keratins, having molecular weights of 6-20 kDa, whereas the microfibrils contain the larger, low-sulfur keratins (40-56 kDa). In Ovis aries (Sheep), this protein is Keratin, high-sulfur matrix protein, IIIA3.